Here is a 23-residue protein sequence, read N- to C-terminus: IIGDTINGAITTADNIAGKIGII.

Expressed in skin glands.

It localises to the secreted. In terms of biological role, may act as an antimicrobial peptide. The protein is Septenin 2 of Osteopilus septentrionalis (Cuban treefrog).